Reading from the N-terminus, the 157-residue chain is Arginine repressor (157 aa).

This sequence belongs to the ArgR family.

The protein resides in the cytoplasm. Its pathway is amino-acid biosynthesis; L-arginine biosynthesis [regulation]. Regulates arginine biosynthesis genes. The chain is Arginine repressor from Deinococcus deserti (strain DSM 17065 / CIP 109153 / LMG 22923 / VCD115).